A 290-amino-acid chain; its full sequence is 4-hydroxybenzoate octaprenyltransferase (290 aa).

The next 8 helical transmembrane spans lie at 33 to 53, 91 to 111, 116 to 136, 138 to 158, 165 to 185, 212 to 232, 237 to 257, and 269 to 289; these read LAALWVAADGFPGWHLLAVFV, LGVREAALVGVVLTLVAFVLV, WEAVAWSVPAVLFTILYPFTK, FFAMPQAFLGIAFNFGIVIAF, VPATAWVLWLANLFLVLAYDT, VAAIMGFFVLCLGLTAWVLAP, WPLWLGLGVAAAQVAWHFTLI, and FSKSHWIGAAIFAGVALGYLL.

The protein belongs to the UbiA prenyltransferase family. It depends on Mg(2+) as a cofactor.

It localises to the cell inner membrane. It catalyses the reaction all-trans-octaprenyl diphosphate + 4-hydroxybenzoate = 4-hydroxy-3-(all-trans-octaprenyl)benzoate + diphosphate. It participates in cofactor biosynthesis; ubiquinone biosynthesis. Functionally, catalyzes the prenylation of para-hydroxybenzoate (PHB) with an all-trans polyprenyl group. Mediates the second step in the final reaction sequence of ubiquinone-8 (UQ-8) biosynthesis, which is the condensation of the polyisoprenoid side chain with PHB, generating the first membrane-bound Q intermediate 3-octaprenyl-4-hydroxybenzoate. The chain is 4-hydroxybenzoate octaprenyltransferase from Acidovorax ebreus (strain TPSY) (Diaphorobacter sp. (strain TPSY)).